Here is a 265-residue protein sequence, read N- to C-terminus: Orotidine 5'-phosphate decarboxylase (265 aa).

Substrate contacts are provided by residues Asp-37, 59–61, 91–100, Tyr-217, and Arg-236; these read KTH and DRKFADIGNT. Lys-93 (proton donor) is an active-site residue.

Belongs to the OMP decarboxylase family.

The catalysed reaction is orotidine 5'-phosphate + H(+) = UMP + CO2. The protein operates within pyrimidine metabolism; UMP biosynthesis via de novo pathway; UMP from orotate: step 2/2. This Saccharomycopsis fibuligera (Yeast) protein is Orotidine 5'-phosphate decarboxylase (URA3).